The following is a 425-amino-acid chain: Serine--tRNA ligase (425 aa).

Disordered regions lie at residues 43–69 (QRSS…SDPK) and 108–134 (LPNL…WGKP). The segment covering 117–134 (PEGRDENDNQERHRWGKP) has biased composition (basic and acidic residues). 233-235 (TAE) serves as a coordination point for L-serine. 264 to 266 (RRE) is a binding site for ATP. Residue glutamate 287 coordinates L-serine. 351–354 (EISS) is a binding site for ATP. An L-serine-binding site is contributed by serine 385.

The protein belongs to the class-II aminoacyl-tRNA synthetase family. Type-1 seryl-tRNA synthetase subfamily. In terms of assembly, homodimer. The tRNA molecule binds across the dimer.

It localises to the cytoplasm. It catalyses the reaction tRNA(Ser) + L-serine + ATP = L-seryl-tRNA(Ser) + AMP + diphosphate + H(+). The catalysed reaction is tRNA(Sec) + L-serine + ATP = L-seryl-tRNA(Sec) + AMP + diphosphate + H(+). The protein operates within aminoacyl-tRNA biosynthesis; selenocysteinyl-tRNA(Sec) biosynthesis; L-seryl-tRNA(Sec) from L-serine and tRNA(Sec): step 1/1. Its function is as follows. Catalyzes the attachment of serine to tRNA(Ser). Is also able to aminoacylate tRNA(Sec) with serine, to form the misacylated tRNA L-seryl-tRNA(Sec), which will be further converted into selenocysteinyl-tRNA(Sec). This Prochlorococcus marinus (strain MIT 9313) protein is Serine--tRNA ligase.